Reading from the N-terminus, the 563-residue chain is BOS complex subunit NCLN (563 aa).

The first 42 residues, 1 to 42 (MLEEAGEVLENVLKASCLPLGFIVFLPAVLLLVAPPLPAADA), serve as a signal peptide directing secretion. The Lumenal portion of the chain corresponds to 43 to 522 (AHEFTVYRMQ…VMNAYRVKPA (480 aa)). 2 N-linked (GlcNAc...) asparagine glycosylation sites follow: Asn-241 and Asn-428. A helical transmembrane segment spans residues 523-543 (IFDLLLALCIGAYLGMAYTAV). The Cytoplasmic segment spans residues 544-563 (QHFHVLYKTVQRLLLKAKAQ).

The protein belongs to the nicastrin family. As to quaternary structure, component of the back of Sec61 (BOS) complex, composed of NCLN/Nicalin, NOMO1 and TMEM147. The BOS complex is part of the multi-pass translocon (MPT) complex, composed of three subcomplexes, the GEL complex (composed of RAB5IF/OPTI and TMCO1), the BOS complex (composed of NCLN/Nicalin, NOMO1 and TMEM147) and the PAT complex (composed of WDR83OS/Asterix and CCDC47). The MPT complex associates with the SEC61 complex.

It localises to the endoplasmic reticulum membrane. In terms of biological role, component of the multi-pass translocon (MPT) complex that mediates insertion of multi-pass membrane proteins into the lipid bilayer of membranes. The MPT complex takes over after the SEC61 complex: following membrane insertion of the first few transmembrane segments of proteins by the SEC61 complex, the MPT complex occludes the lateral gate of the SEC61 complex to promote insertion of subsequent transmembrane regions. May antagonize Nodal signaling and subsequent organization of axial structures during mesodermal patterning, via its interaction with NOMO. The sequence is that of BOS complex subunit NCLN (Ncln) from Rattus norvegicus (Rat).